The sequence spans 127 residues: Chorismate mutase AroH (127 aa).

Residues 3–121 (IRGIRGATTV…VVVLRPDLSL (119 aa)) enclose the Chorismate mutase aroH-type domain. Residues Arg-7, 74-78 (TCMQE), Arg-90, and Tyr-108 contribute to the prephenate site.

Homotrimer.

Its subcellular location is the cytoplasm. It catalyses the reaction chorismate = prephenate. The protein operates within metabolic intermediate biosynthesis; prephenate biosynthesis; prephenate from chorismate: step 1/1. In terms of biological role, catalyzes the Claisen rearrangement of chorismate to prephenate. Probably involved in the aromatic amino acid biosynthesis. This is Chorismate mutase AroH from Bacillus subtilis (strain 168).